Here is a 673-residue protein sequence, read N- to C-terminus: Leucine zipper putative tumor suppressor 3 (673 aa).

Disordered regions lie at residues 1-157 (MAKL…CSEP), 172-239 (FHSM…QHLA), and 251-317 (IGTA…PPSP). Positions 79-92 (SRERPGRYPSEDKG) are enriched in basic and acidic residues. Residues 173-186 (HSMQNLCPPQTNGT) are compositionally biased toward polar residues. The span at 215 to 235 (GLSDSGRNSLTSLPTYSSSYS) shows a compositional bias: low complexity. Residues 258–269 (SGSGGSSGGGSG) show a composition bias toward gly residues. Low complexity predominate over residues 274 to 294 (GTSDSGRASSKSGSSSSMGRP). The segment covering 295-307 (GHLGSGEGGGGGL) has biased composition (gly residues). A phosphoserine mark is found at Ser316 and Ser318. Coiled-coil stretches lie at residues 317–496 (PSAL…SLRD) and 571–639 (RALR…RLRE). Residues 635–673 (RRLRERGAAGGASTPTPQHGEEKKAWTPSRLERIESTEI) form a disordered region. The span at 653 to 673 (HGEEKKAWTPSRLERIESTEI) shows a compositional bias: basic and acidic residues.

Belongs to the LZTS3 family. As to quaternary structure, interacts (via C-terminus) with SHANK3 (via PDZ domain). Interacts (via coiled coil) with SIPA1L1. Can form homooligomers.

It localises to the synapse. The protein localises to the postsynaptic density. Its subcellular location is the cell projection. It is found in the dendritic spine. The protein resides in the dendrite. It localises to the cytoplasm. The protein localises to the cytoskeleton. May be involved in promoting the maturation of dendritic spines, probably via regulating SIPA1L1 levels at the postsynaptic density of synapses. The polypeptide is Leucine zipper putative tumor suppressor 3 (Homo sapiens (Human)).